The sequence spans 54 residues: Large ribosomal subunit protein bL33B (54 aa).

Belongs to the bacterial ribosomal protein bL33 family.

The polypeptide is Large ribosomal subunit protein bL33B (Mycolicibacterium smegmatis (strain ATCC 700084 / mc(2)155) (Mycobacterium smegmatis)).